Here is a 318-residue protein sequence, read N- to C-terminus: Probable metal transport system membrane protein CT_070 (318 aa).

The next 10 helical transmembrane spans lie at 1–21 (MVAS…LVFF), 39–59 (IQVI…TFLV), 64–84 (AMYA…VCLF), 94–114 (QALT…IHFI), 124–144 (ASTA…LVFL), 170–190 (IFLV…SFVC), 196–216 (IFAF…MLLL), 226–246 (AVGV…AKLI), 252–272 (EMMV…PALS), and 285–305 (TSGL…VFVC).

Belongs to the ABC-3 integral membrane protein family.

Its subcellular location is the cell inner membrane. Part of an ATP-driven transport system CT_067/CT_068/CT_069/CT_070 for a metal. The sequence is that of Probable metal transport system membrane protein CT_070 from Chlamydia trachomatis serovar D (strain ATCC VR-885 / DSM 19411 / UW-3/Cx).